Reading from the N-terminus, the 316-residue chain is Probable cell division protein WhiA (316 aa).

A DNA-binding region (H-T-H motif) is located at residues 280–313 (SLKELGEMLEPPVGKSGVNHRLRKIEKIAEELRT).

Belongs to the WhiA family.

Functionally, involved in cell division and chromosome segregation. The chain is Probable cell division protein WhiA from Clostridium perfringens (strain ATCC 13124 / DSM 756 / JCM 1290 / NCIMB 6125 / NCTC 8237 / Type A).